The primary structure comprises 53 residues: MPHLSPMSWITSMLMFWISVSILFSTLWWSNNYLFSSKMTNCAPKSLTPWNWL.

Residues 9–29 form a helical membrane-spanning segment; that stretch reads WITSMLMFWISVSILFSTLWW.

This sequence belongs to the ATPase protein 8 family. As to quaternary structure, F-type ATPases have 2 components, CF(1) - the catalytic core - and CF(0) - the membrane proton channel.

It localises to the mitochondrion membrane. Functionally, mitochondrial membrane ATP synthase (F(1)F(0) ATP synthase or Complex V) produces ATP from ADP in the presence of a proton gradient across the membrane which is generated by electron transport complexes of the respiratory chain. F-type ATPases consist of two structural domains, F(1) - containing the extramembraneous catalytic core and F(0) - containing the membrane proton channel, linked together by a central stalk and a peripheral stalk. During catalysis, ATP synthesis in the catalytic domain of F(1) is coupled via a rotary mechanism of the central stalk subunits to proton translocation. Part of the complex F(0) domain. Minor subunit located with subunit a in the membrane. This Lumbricus terrestris (Common earthworm) protein is ATP synthase protein 8 (MT-ATP8).